We begin with the raw amino-acid sequence, 118 residues long: Large ribosomal subunit protein bL20c (118 aa).

This sequence belongs to the bacterial ribosomal protein bL20 family.

It localises to the plastid. Its subcellular location is the chloroplast. Its function is as follows. Binds directly to 23S ribosomal RNA and is necessary for the in vitro assembly process of the 50S ribosomal subunit. It is not involved in the protein synthesizing functions of that subunit. The sequence is that of Large ribosomal subunit protein bL20c from Gracilaria tenuistipitata var. liui (Red alga).